The chain runs to 309 residues: Glutaminase (309 aa).

7 residues coordinate substrate: serine 64, asparagine 114, glutamate 160, asparagine 167, tyrosine 191, tyrosine 243, and valine 261.

This sequence belongs to the glutaminase family. In terms of assembly, homotetramer.

The catalysed reaction is L-glutamine + H2O = L-glutamate + NH4(+). The sequence is that of Glutaminase from Rhizobium rhizogenes (strain K84 / ATCC BAA-868) (Agrobacterium radiobacter).